The sequence spans 236 residues: Sperm flagellar protein 1 (236 aa).

A Calponin-homology (CH) domain is found at 7-112 (EEALHQLYLW…VLIPLRQRLE (106 aa)). The disordered stretch occupies residues 118 to 177 (RKQGIGSLQELAPQDGTDYMDVGLSQKARGEGVPDPQGRGQLREGRLPVPRPPGDSQALQ). Residues 183 to 236 (ILQIAEKEQELLASQETVQVLQMKVRRLEHLLQLKNVRIEDLSRRLQQAERKQR) form an essential for homodimerization and microtubule bundling activity region.

Homodimer. Interacts with actin, TJP1, CGN and CDH1.

It localises to the cytoplasm. The protein resides in the cell projection. The protein localises to the cilium. It is found in the flagellum. Its subcellular location is the cytoskeleton. It localises to the cilium axoneme. The protein resides in the apical cell membrane. The protein localises to the basolateral cell membrane. It is found in the stress fiber. Its subcellular location is the microvillus. It localises to the lamellipodium. The protein resides in the filopodium. Functionally, microtubule-associated protein involved in the stabilization of microtubules along the axis of migration during radial intercalation. Promotes the establishment and stabilization of an axis of microtubules required for the active migration of cells into the outer epithelium. Microtubule-associated protein that promotes microtubule bundling and stabilizes microtubules against depolymerization in response to cold shock. Essential for ciliary central apparatus formation which requires both its microtubule-binding and bundling activities and for ciliary localization of HYDIN and SPAG6 in ependymal cilia. Binds actin in intestinal epithelial cells (IECs), essential for IECs survival and contributes to formation of filopodia and lamellipodia in migrating IECs. Regulates planar cell polarity signaling pathway and asymmetric microtubule accumulation in ciliated epithelia. This chain is Sperm flagellar protein 1 (SPEF1), found in Bos taurus (Bovine).